A 380-amino-acid chain; its full sequence is Chaperone protein DnaJ (380 aa).

The J domain maps to 5-69 (DYYEILGVSK…QKRAHYDQFG (65 aa)). A CR-type zinc finger spans residues 135 to 217 (GKETDIEIPR…CGGTGRVKRR (83 aa)). 8 residues coordinate Zn(2+): C148, C151, C165, C168, C191, C194, C205, and C208. CXXCXGXG motif repeat units follow at residues 148–155 (CNTCHGTG), 165–172 (CSYCHGTG), 191–198 (CPYCGGTG), and 205–212 (CTTCGGTG).

It belongs to the DnaJ family. As to quaternary structure, homodimer. It depends on Zn(2+) as a cofactor.

It localises to the cytoplasm. Functionally, participates actively in the response to hyperosmotic and heat shock by preventing the aggregation of stress-denatured proteins and by disaggregating proteins, also in an autonomous, DnaK-independent fashion. Unfolded proteins bind initially to DnaJ; upon interaction with the DnaJ-bound protein, DnaK hydrolyzes its bound ATP, resulting in the formation of a stable complex. GrpE releases ADP from DnaK; ATP binding to DnaK triggers the release of the substrate protein, thus completing the reaction cycle. Several rounds of ATP-dependent interactions between DnaJ, DnaK and GrpE are required for fully efficient folding. Also involved, together with DnaK and GrpE, in the DNA replication of plasmids through activation of initiation proteins. In Parageobacillus thermoglucosidasius (Geobacillus thermoglucosidasius), this protein is Chaperone protein DnaJ.